We begin with the raw amino-acid sequence, 58 residues long: UPF0337 protein CE1672 (58 aa).

Residues 1-39 show a composition bias toward basic and acidic residues; sequence MGLGDKIRNTAEKASGKVKEATGKATDNEKLEAEGKTDQ. Positions 1–58 are disordered; the sequence is MGLGDKIRNTAEKASGKVKEATGKATDNEKLEAEGKTDQFKGNAKNTVENAKDTLRGN.

This sequence belongs to the UPF0337 (CsbD) family.

The polypeptide is UPF0337 protein CE1672 (Corynebacterium efficiens (strain DSM 44549 / YS-314 / AJ 12310 / JCM 11189 / NBRC 100395)).